The chain runs to 287 residues: GTPase Era (287 aa).

The Era-type G domain occupies 6-178 (FSGTSVIIGK…IQNKLKIVPK (173 aa)). Positions 14-21 (GKPNVGKS) are G1. 14-21 (GKPNVGKS) is a GTP binding site. The G2 stretch occupies residues 40 to 44 (HTTQS). Residues 62–65 (DTPG) form a G3 region. GTP is bound by residues 62–66 (DTPGI) and 124–127 (NKID). Positions 124–127 (NKID) are G4. The interval 154 to 156 (ISG) is G5. Residues 207-282 (LGDELPYSIQ…SIYLSLKVIK (76 aa)) form the KH type-2 domain.

It belongs to the TRAFAC class TrmE-Era-EngA-EngB-Septin-like GTPase superfamily. Era GTPase family. In terms of assembly, monomer.

The protein resides in the cytoplasm. It localises to the cell membrane. An essential GTPase that binds both GDP and GTP, with rapid nucleotide exchange. Plays a role in 16S rRNA processing and 30S ribosomal subunit biogenesis and possibly also in cell cycle regulation and energy metabolism. This Buchnera aphidicola subsp. Baizongia pistaciae (strain Bp) protein is GTPase Era.